Consider the following 353-residue polypeptide: Protein-glutamate methylesterase/protein-glutamine glutaminase (353 aa).

Positions 6 to 123 (RVLVIDDSAL…ARGLKAMLSE (118 aa)) constitute a Response regulatory domain. D57 bears the 4-aspartylphosphate mark. The CheB-type methylesterase domain maps to 159 to 351 (AESTDKVIAI…PRIVDLLSER (193 aa)). Catalysis depends on residues S171, H197, and D293.

Belongs to the CheB family. In terms of processing, phosphorylated by CheA. Phosphorylation of the N-terminal regulatory domain activates the methylesterase activity.

The protein resides in the cytoplasm. It carries out the reaction [protein]-L-glutamate 5-O-methyl ester + H2O = L-glutamyl-[protein] + methanol + H(+). The catalysed reaction is L-glutaminyl-[protein] + H2O = L-glutamyl-[protein] + NH4(+). Functionally, involved in chemotaxis. Part of a chemotaxis signal transduction system that modulates chemotaxis in response to various stimuli. Catalyzes the demethylation of specific methylglutamate residues introduced into the chemoreceptors (methyl-accepting chemotaxis proteins or MCP) by CheR. Also mediates the irreversible deamidation of specific glutamine residues to glutamic acid. In Syntrophotalea carbinolica (strain DSM 2380 / NBRC 103641 / GraBd1) (Pelobacter carbinolicus), this protein is Protein-glutamate methylesterase/protein-glutamine glutaminase.